Here is a 450-residue protein sequence, read N- to C-terminus: Bifunctional protein GlmU (450 aa).

A pyrophosphorylase region spans residues 1–229; it reads MGVALIVLAA…EAETLGINTR (229 aa). Residues 8–11, Lys-22, Gln-75, 80–81, 103–105, Gly-141, Glu-155, Asn-170, and Asn-227 each bind UDP-N-acetyl-alpha-D-glucosamine; these read LAAG, GT, and YGD. Mg(2+) is bound at residue Asp-105. Asn-227 lines the Mg(2+) pocket. A linker region spans residues 230–250; the sequence is TELAAAEQAFQARARARALED. Residues 251 to 450 form an N-acetyltransferase region; that stretch reads GVTLADPATT…RARKSAKGAQ (200 aa). 2 residues coordinate UDP-N-acetyl-alpha-D-glucosamine: Arg-316 and Lys-334. Residue His-346 is the Proton acceptor of the active site. Positions 349 and 360 each coordinate UDP-N-acetyl-alpha-D-glucosamine. Residues Ala-363, 369–370, Ser-388, Thr-406, and Arg-423 contribute to the acetyl-CoA site; that span reads NY.

It in the N-terminal section; belongs to the N-acetylglucosamine-1-phosphate uridyltransferase family. This sequence in the C-terminal section; belongs to the transferase hexapeptide repeat family. Homotrimer. Mg(2+) serves as cofactor.

It localises to the cytoplasm. It carries out the reaction alpha-D-glucosamine 1-phosphate + acetyl-CoA = N-acetyl-alpha-D-glucosamine 1-phosphate + CoA + H(+). The catalysed reaction is N-acetyl-alpha-D-glucosamine 1-phosphate + UTP + H(+) = UDP-N-acetyl-alpha-D-glucosamine + diphosphate. Its pathway is nucleotide-sugar biosynthesis; UDP-N-acetyl-alpha-D-glucosamine biosynthesis; N-acetyl-alpha-D-glucosamine 1-phosphate from alpha-D-glucosamine 6-phosphate (route II): step 2/2. The protein operates within nucleotide-sugar biosynthesis; UDP-N-acetyl-alpha-D-glucosamine biosynthesis; UDP-N-acetyl-alpha-D-glucosamine from N-acetyl-alpha-D-glucosamine 1-phosphate: step 1/1. It functions in the pathway bacterial outer membrane biogenesis; LPS lipid A biosynthesis. In terms of biological role, catalyzes the last two sequential reactions in the de novo biosynthetic pathway for UDP-N-acetylglucosamine (UDP-GlcNAc). The C-terminal domain catalyzes the transfer of acetyl group from acetyl coenzyme A to glucosamine-1-phosphate (GlcN-1-P) to produce N-acetylglucosamine-1-phosphate (GlcNAc-1-P), which is converted into UDP-GlcNAc by the transfer of uridine 5-monophosphate (from uridine 5-triphosphate), a reaction catalyzed by the N-terminal domain. This chain is Bifunctional protein GlmU, found in Dinoroseobacter shibae (strain DSM 16493 / NCIMB 14021 / DFL 12).